A 106-amino-acid chain; its full sequence is uncharacterized protein (106 aa).

A helical membrane pass occupies residues 78 to 98; that stretch reads LAITGYVVSIPIVLPILIIFI.

The protein localises to the membrane. This is an uncharacterized protein from Haemophilus influenzae (strain ATCC 51907 / DSM 11121 / KW20 / Rd).